We begin with the raw amino-acid sequence, 883 residues long: Phosphoenolpyruvate carboxylase (883 aa).

Catalysis depends on residues His-138 and Lys-546.

This sequence belongs to the PEPCase type 1 family. Mg(2+) is required as a cofactor.

It carries out the reaction oxaloacetate + phosphate = phosphoenolpyruvate + hydrogencarbonate. Its function is as follows. Forms oxaloacetate, a four-carbon dicarboxylic acid source for the tricarboxylic acid cycle. The chain is Phosphoenolpyruvate carboxylase from Enterobacter sp. (strain 638).